The following is a 100-amino-acid chain: Dromyosuppressin (100 aa).

The signal sequence occupies residues 1-24 (MSFAQFFVACCLAIVLLAVSNTRA). The propeptide occupies 25–84 (AVQGPPLCQSGIVEEMPPHIRKVCQALENSDQLTSALKSYINNEASALVANSDDLLKNYN). Phe-96 is modified (phenylalanine amide).

Belongs to the myosuppressin family.

The protein localises to the secreted. Functionally, myoinhibiting neuropeptide. This chain is Dromyosuppressin, found in Drosophila melanogaster (Fruit fly).